The following is a 427-amino-acid chain: Glutamate-1-semialdehyde 2,1-aminomutase (427 aa).

Lys-268 is subject to N6-(pyridoxal phosphate)lysine.

The protein belongs to the class-III pyridoxal-phosphate-dependent aminotransferase family. HemL subfamily. Pyridoxal 5'-phosphate is required as a cofactor.

The protein localises to the cytoplasm. It carries out the reaction (S)-4-amino-5-oxopentanoate = 5-aminolevulinate. It functions in the pathway porphyrin-containing compound metabolism; protoporphyrin-IX biosynthesis; 5-aminolevulinate from L-glutamyl-tRNA(Glu): step 2/2. This is Glutamate-1-semialdehyde 2,1-aminomutase from Methanococcus maripaludis (strain DSM 14266 / JCM 13030 / NBRC 101832 / S2 / LL).